We begin with the raw amino-acid sequence, 225 residues long: Holliday junction branch migration complex subunit RuvA (225 aa).

Positions 1 to 71 (MISWINGDLV…EDSDLLFGFT (71 aa)) are domain I. The tract at residues 72-150 (SKDQKNFFIE…SEILSEEEKS (79 aa)) is domain II. A flexible linker region spans residues 151–161 (KDEFEIKDPEI). The segment at 161–225 (IIKMIEDLQL…LDEDSSNKDR (65 aa)) is domain III.

It belongs to the RuvA family. As to quaternary structure, homotetramer. Forms an RuvA(8)-RuvB(12)-Holliday junction (HJ) complex. HJ DNA is sandwiched between 2 RuvA tetramers; dsDNA enters through RuvA and exits via RuvB. An RuvB hexamer assembles on each DNA strand where it exits the tetramer. Each RuvB hexamer is contacted by two RuvA subunits (via domain III) on 2 adjacent RuvB subunits; this complex drives branch migration. In the full resolvosome a probable DNA-RuvA(4)-RuvB(12)-RuvC(2) complex forms which resolves the HJ.

It is found in the cytoplasm. Functionally, the RuvA-RuvB-RuvC complex processes Holliday junction (HJ) DNA during genetic recombination and DNA repair, while the RuvA-RuvB complex plays an important role in the rescue of blocked DNA replication forks via replication fork reversal (RFR). RuvA specifically binds to HJ cruciform DNA, conferring on it an open structure. The RuvB hexamer acts as an ATP-dependent pump, pulling dsDNA into and through the RuvAB complex. HJ branch migration allows RuvC to scan DNA until it finds its consensus sequence, where it cleaves and resolves the cruciform DNA. In Prochlorococcus marinus (strain AS9601), this protein is Holliday junction branch migration complex subunit RuvA.